The chain runs to 520 residues: Major capsid protein (520 aa).

Belongs to the NCLDV major capsid protein family.

The protein localises to the virion. Functionally, major capsid protein that self assembles to form an icosahedral capsid with a T=219 symmetry. In Phaeocystis pouchetii (PpV01), this protein is Major capsid protein (MCP).